A 237-amino-acid chain; its full sequence is Methylosome subunit pICln (237 aa).

At serine 2 the chain carries N-acetylserine. A phosphoserine mark is found at serine 102, serine 144, serine 193, serine 195, serine 198, and serine 210. The disordered stretch occupies residues 135-159 (LHPDPEDEDSDDYDGEEYDVEAHEQ). The span at 139 to 153 (PEDEDSDDYDGEEYD) shows a compositional bias: acidic residues. At threonine 223 the chain carries Phosphothreonine.

Belongs to the pICln (TC 1.A.47) family. As to quaternary structure, component of the methylosome, a 20S complex containing at least PRMT5/SKB1, WDR77/MEP50 and CLNS1A/pICln. May mediate SNRPD1 and SNRPD3 methylation. Forms a 6S pICln-Sm complex composed of CLNS1A/pICln, SNRPD1, SNRPD2, SNRPE, SNRPF and SNRPG; ring-like structure where CLNS1A/pICln mimics additional Sm proteins and which is unable to assemble into the core snRNP. Interacts with LSM10 and LSM11.

Its subcellular location is the cytoplasm. It localises to the cytosol. The protein localises to the nucleus. It is found in the cytoskeleton. Functionally, involved in both the assembly of spliceosomal snRNPs and the methylation of Sm proteins. Chaperone that regulates the assembly of spliceosomal U1, U2, U4 and U5 small nuclear ribonucleoproteins (snRNPs), the building blocks of the spliceosome, and thereby plays an important role in the splicing of cellular pre-mRNAs. Most spliceosomal snRNPs contain a common set of Sm proteins SNRPB, SNRPD1, SNRPD2, SNRPD3, SNRPE, SNRPF and SNRPG that assemble in a heptameric protein ring on the Sm site of the small nuclear RNA to form the core snRNP (Sm core). In the cytosol, the Sm proteins SNRPD1, SNRPD2, SNRPE, SNRPF and SNRPG are trapped in an inactive 6S pICln-Sm complex by the chaperone CLNS1A that controls the assembly of the core snRNP. Dissociation by the SMN complex of CLNS1A from the trapped Sm proteins and their transfer to an SMN-Sm complex triggers the assembly of core snRNPs and their transport to the nucleus. The protein is Methylosome subunit pICln (CLNS1A) of Homo sapiens (Human).